We begin with the raw amino-acid sequence, 390 residues long: 1-deoxy-D-xylulose 5-phosphate reductoisomerase (390 aa).

The NADPH site is built by T10, G11, S12, V13, G38, N40, and N123. Residue K124 coordinates 1-deoxy-D-xylulose 5-phosphate. E125 provides a ligand contact to NADPH. D149 provides a ligand contact to Mn(2+). 4 residues coordinate 1-deoxy-D-xylulose 5-phosphate: S150, E151, S175, and H198. E151 is a binding site for Mn(2+). Residue G204 participates in NADPH binding. S211, N216, K217, and E220 together coordinate 1-deoxy-D-xylulose 5-phosphate. E220 contacts Mn(2+).

Belongs to the DXR family. The cofactor is Mg(2+). Mn(2+) serves as cofactor.

It carries out the reaction 2-C-methyl-D-erythritol 4-phosphate + NADP(+) = 1-deoxy-D-xylulose 5-phosphate + NADPH + H(+). The protein operates within isoprenoid biosynthesis; isopentenyl diphosphate biosynthesis via DXP pathway; isopentenyl diphosphate from 1-deoxy-D-xylulose 5-phosphate: step 1/6. Catalyzes the NADPH-dependent rearrangement and reduction of 1-deoxy-D-xylulose-5-phosphate (DXP) to 2-C-methyl-D-erythritol 4-phosphate (MEP). In Paracoccus denitrificans (strain Pd 1222), this protein is 1-deoxy-D-xylulose 5-phosphate reductoisomerase.